The sequence spans 1571 residues: Pentafunctional AROM polypeptide (1571 aa).

Residues M1–N384 are 3-dehydroquinate synthase. Residues D44–N46, E81–K84, G114–V116, and D119 each bind NAD(+). R130 serves as a coordination point for 7-phospho-2-dehydro-3-deoxy-D-arabino-heptonate. T139–T140 is an NAD(+) binding site. 7-phospho-2-dehydro-3-deoxy-D-arabino-heptonate contacts are provided by D146 and K152. Position 161 (K161) interacts with NAD(+). N162 is a 7-phospho-2-dehydro-3-deoxy-D-arabino-heptonate binding site. Residues F179–T182 and N190 each bind NAD(+). E194 lines the Zn(2+) pocket. 7-phospho-2-dehydro-3-deoxy-D-arabino-heptonate contacts are provided by residues E194 to K197 and K250. The active-site Proton acceptor; for 3-dehydroquinate synthase activity is E260. Residues R264–N268 and H271 contribute to the 7-phospho-2-dehydro-3-deoxy-D-arabino-heptonate site. H271 is a binding site for Zn(2+). H275 acts as the Proton acceptor; for 3-dehydroquinate synthase activity in catalysis. Residues H287 and K356 each contribute to the 7-phospho-2-dehydro-3-deoxy-D-arabino-heptonate site. Residue H287 participates in Zn(2+) binding. Positions V397–V843 are EPSP synthase. C825 serves as the catalytic For EPSP synthase activity. The tract at residues A866–S1057 is shikimate kinase. Residue G872 to T879 coordinates ATP. A 3-dehydroquinase region spans residues L1058 to D1278. The Proton acceptor; for 3-dehydroquinate dehydratase activity role is filled by H1181. The active-site Schiff-base intermediate with substrate; for 3-dehydroquinate dehydratase activity is the K1209. A shikimate dehydrogenase region spans residues A1291–I1571.

This sequence in the N-terminal section; belongs to the sugar phosphate cyclases superfamily. Dehydroquinate synthase family. It in the 2nd section; belongs to the EPSP synthase family. The protein in the 3rd section; belongs to the shikimate kinase family. In the 4th section; belongs to the type-I 3-dehydroquinase family. This sequence in the C-terminal section; belongs to the shikimate dehydrogenase family. As to quaternary structure, homodimer. Zn(2+) serves as cofactor.

Its subcellular location is the cytoplasm. It carries out the reaction 7-phospho-2-dehydro-3-deoxy-D-arabino-heptonate = 3-dehydroquinate + phosphate. It catalyses the reaction 3-dehydroquinate = 3-dehydroshikimate + H2O. The enzyme catalyses shikimate + NADP(+) = 3-dehydroshikimate + NADPH + H(+). The catalysed reaction is shikimate + ATP = 3-phosphoshikimate + ADP + H(+). It carries out the reaction 3-phosphoshikimate + phosphoenolpyruvate = 5-O-(1-carboxyvinyl)-3-phosphoshikimate + phosphate. It functions in the pathway metabolic intermediate biosynthesis; chorismate biosynthesis; chorismate from D-erythrose 4-phosphate and phosphoenolpyruvate: step 2/7. It participates in metabolic intermediate biosynthesis; chorismate biosynthesis; chorismate from D-erythrose 4-phosphate and phosphoenolpyruvate: step 3/7. Its pathway is metabolic intermediate biosynthesis; chorismate biosynthesis; chorismate from D-erythrose 4-phosphate and phosphoenolpyruvate: step 4/7. The protein operates within metabolic intermediate biosynthesis; chorismate biosynthesis; chorismate from D-erythrose 4-phosphate and phosphoenolpyruvate: step 5/7. It functions in the pathway metabolic intermediate biosynthesis; chorismate biosynthesis; chorismate from D-erythrose 4-phosphate and phosphoenolpyruvate: step 6/7. The AROM polypeptide catalyzes 5 consecutive enzymatic reactions in prechorismate polyaromatic amino acid biosynthesis. This Arthroderma otae (strain ATCC MYA-4605 / CBS 113480) (Microsporum canis) protein is Pentafunctional AROM polypeptide.